A 330-amino-acid chain; its full sequence is Ketol-acid reductoisomerase (NADP(+)) (330 aa).

Residues 1–181 (MNVYYEQDAD…GGAKAGVIET (181 aa)) form the KARI N-terminal Rossmann domain. NADP(+) is bound by residues 24-27 (YGSQ), Arg47, Ser50, Ser52, and 82-85 (DQYQ). His107 is a catalytic residue. Residue Gly133 participates in NADP(+) binding. A KARI C-terminal knotted domain is found at 182 to 327 (TIKNETETDL…AKLRNMMSWL (146 aa)). Residues Asp190, Glu194, Glu226, and Glu230 each contribute to the Mg(2+) site. Ser251 is a substrate binding site.

Belongs to the ketol-acid reductoisomerase family. Mg(2+) is required as a cofactor.

The enzyme catalyses (2R)-2,3-dihydroxy-3-methylbutanoate + NADP(+) = (2S)-2-acetolactate + NADPH + H(+). It catalyses the reaction (2R,3R)-2,3-dihydroxy-3-methylpentanoate + NADP(+) = (S)-2-ethyl-2-hydroxy-3-oxobutanoate + NADPH + H(+). The protein operates within amino-acid biosynthesis; L-isoleucine biosynthesis; L-isoleucine from 2-oxobutanoate: step 2/4. It participates in amino-acid biosynthesis; L-valine biosynthesis; L-valine from pyruvate: step 2/4. In terms of biological role, involved in the biosynthesis of branched-chain amino acids (BCAA). Catalyzes an alkyl-migration followed by a ketol-acid reduction of (S)-2-acetolactate (S2AL) to yield (R)-2,3-dihydroxy-isovalerate. In the isomerase reaction, S2AL is rearranged via a Mg-dependent methyl migration to produce 3-hydroxy-3-methyl-2-ketobutyrate (HMKB). In the reductase reaction, this 2-ketoacid undergoes a metal-dependent reduction by NADPH to yield (R)-2,3-dihydroxy-isovalerate. The sequence is that of Ketol-acid reductoisomerase (NADP(+)) from Chlorobium phaeovibrioides (strain DSM 265 / 1930) (Prosthecochloris vibrioformis (strain DSM 265)).